Reading from the N-terminus, the 484-residue chain is HTH-type transcriptional regulator TauR (484 aa).

One can recognise an HTH gntR-type domain in the interval 16–84 (GSLQHRLRQM…GRSGTFVSAA (69 aa)). The segment at residues 44–63 (TRALAAHLGVARITVTLAYA) is a DNA-binding region (H-T-H motif). An N6-(pyridoxal phosphate)lysine modification is found at K330.

This sequence in the C-terminal section; belongs to the class-I pyridoxal-phosphate-dependent aminotransferase family. Pyridoxal 5'-phosphate serves as cofactor.

Transcriptional activator, which is essential for taurine-dependent expression of the tpa-tauR-xsc operon. Acts by binding to direct repeats in the promoter region. This is HTH-type transcriptional regulator TauR from Rhodobacter capsulatus (strain ATCC BAA-309 / NBRC 16581 / SB1003).